The primary structure comprises 66 residues: Large ribosomal subunit protein bL35 (66 aa).

This sequence belongs to the bacterial ribosomal protein bL35 family.

The polypeptide is Large ribosomal subunit protein bL35 (Rhodopseudomonas palustris (strain BisB18)).